Here is a 274-residue protein sequence, read N- to C-terminus: 2,3,4,5-tetrahydropyridine-2,6-dicarboxylate N-succinyltransferase (274 aa).

This sequence belongs to the transferase hexapeptide repeat family.

The protein localises to the cytoplasm. It carries out the reaction (S)-2,3,4,5-tetrahydrodipicolinate + succinyl-CoA + H2O = (S)-2-succinylamino-6-oxoheptanedioate + CoA. The protein operates within amino-acid biosynthesis; L-lysine biosynthesis via DAP pathway; LL-2,6-diaminopimelate from (S)-tetrahydrodipicolinate (succinylase route): step 1/3. This Delftia acidovorans (strain DSM 14801 / SPH-1) protein is 2,3,4,5-tetrahydropyridine-2,6-dicarboxylate N-succinyltransferase.